Consider the following 593-residue polypeptide: Aspartate--tRNA ligase (593 aa).

Glu180 serves as a coordination point for L-aspartate. Positions 204-207 are aspartate; it reads QIFK. Arg226 provides a ligand contact to L-aspartate. ATP is bound by residues 226–228 and Gln235; that span reads RDE. Residue His453 participates in L-aspartate binding. Residue Glu487 participates in ATP binding. Arg494 contributes to the L-aspartate binding site. 539 to 542 provides a ligand contact to ATP; that stretch reads GLDR.

The protein belongs to the class-II aminoacyl-tRNA synthetase family. Type 1 subfamily. As to quaternary structure, homodimer.

It localises to the cytoplasm. It catalyses the reaction tRNA(Asp) + L-aspartate + ATP = L-aspartyl-tRNA(Asp) + AMP + diphosphate. Its function is as follows. Catalyzes the attachment of L-aspartate to tRNA(Asp) in a two-step reaction: L-aspartate is first activated by ATP to form Asp-AMP and then transferred to the acceptor end of tRNA(Asp). This Clostridium botulinum (strain ATCC 19397 / Type A) protein is Aspartate--tRNA ligase.